Consider the following 423-residue polypeptide: Glucose-1-phosphate adenylyltransferase (423 aa).

Alpha-D-glucose 1-phosphate contacts are provided by residues Tyr-110, Gly-175, 190–191 (EK), and Ser-208.

It belongs to the bacterial/plant glucose-1-phosphate adenylyltransferase family. In terms of assembly, homotetramer.

It catalyses the reaction alpha-D-glucose 1-phosphate + ATP + H(+) = ADP-alpha-D-glucose + diphosphate. It participates in glycan biosynthesis; glycogen biosynthesis. Its function is as follows. Involved in the biosynthesis of ADP-glucose, a building block required for the elongation reactions to produce glycogen. Catalyzes the reaction between ATP and alpha-D-glucose 1-phosphate (G1P) to produce pyrophosphate and ADP-Glc. The chain is Glucose-1-phosphate adenylyltransferase from Nitrosococcus oceani (strain ATCC 19707 / BCRC 17464 / JCM 30415 / NCIMB 11848 / C-107).